We begin with the raw amino-acid sequence, 395 residues long: ASTRA-associated protein 1 (395 aa).

WD repeat units lie at residues 7-48 (AHVS…PIAS), 221-260 (HYPE…LPVV), and 343-386 (INPG…TGYN).

It belongs to the WD repeat ASA1 family. As to quaternary structure, component of the ASTRA chromatin remodeling machinery complex.

It localises to the nucleus. In terms of biological role, component of the ASTRA complex involved in chromatin remodeling. The protein is ASTRA-associated protein 1 (ASA1) of Eremothecium gossypii (strain ATCC 10895 / CBS 109.51 / FGSC 9923 / NRRL Y-1056) (Yeast).